A 102-amino-acid chain; its full sequence is Small ribosomal subunit protein uS10 (102 aa).

The interval 34-61 is disordered; that stretch reads MAGPIPLPTKTLKVTTRKSTDGEGSSSF.

This sequence belongs to the universal ribosomal protein uS10 family. In terms of assembly, part of the 30S ribosomal subunit.

In terms of biological role, involved in the binding of tRNA to the ribosomes. The chain is Small ribosomal subunit protein uS10 from Methanococcus aeolicus (strain ATCC BAA-1280 / DSM 17508 / OCM 812 / Nankai-3).